The following is a 676-amino-acid chain: Translation initiation factor IF-2, mitochondrial (676 aa).

A tr-type G domain is found at K143–K326. Residues G152–T159 form a G1 region. Residue G152 to T159 coordinates GTP. The interval G177–H181 is G2. GTP-binding positions include D200–G203 and T254–D257. The tract at residues D200–G203 is G3. Positions T254–D257 are G4. The G5 stretch occupies residues S296 to K298.

This sequence belongs to the TRAFAC class translation factor GTPase superfamily. Classic translation factor GTPase family. IF-2 subfamily.

It localises to the mitochondrion. In terms of biological role, one of the essential components for the initiation of protein synthesis. Protects formylmethionyl-tRNA from spontaneous hydrolysis and promotes its binding to the 30S ribosomal subunits. Also involved in the hydrolysis of GTP during the formation of the 70S ribosomal complex. This chain is Translation initiation factor IF-2, mitochondrial (IFM1), found in Saccharomyces cerevisiae (strain ATCC 204508 / S288c) (Baker's yeast).